Consider the following 364-residue polypeptide: UDP-N-acetylglucosamine--N-acetylmuramyl-(pentapeptide) pyrophosphoryl-undecaprenol N-acetylglucosamine transferase (364 aa).

Residues 10 to 12, Asn124, Arg161, Ser195, and Gln291 each bind UDP-N-acetyl-alpha-D-glucosamine; that span reads TAG.

It belongs to the glycosyltransferase 28 family. MurG subfamily.

The protein resides in the cell membrane. It catalyses the reaction di-trans,octa-cis-undecaprenyl diphospho-N-acetyl-alpha-D-muramoyl-L-alanyl-D-glutamyl-meso-2,6-diaminopimeloyl-D-alanyl-D-alanine + UDP-N-acetyl-alpha-D-glucosamine = di-trans,octa-cis-undecaprenyl diphospho-[N-acetyl-alpha-D-glucosaminyl-(1-&gt;4)]-N-acetyl-alpha-D-muramoyl-L-alanyl-D-glutamyl-meso-2,6-diaminopimeloyl-D-alanyl-D-alanine + UDP + H(+). The protein operates within cell wall biogenesis; peptidoglycan biosynthesis. In terms of biological role, cell wall formation. Catalyzes the transfer of a GlcNAc subunit on undecaprenyl-pyrophosphoryl-MurNAc-pentapeptide (lipid intermediate I) to form undecaprenyl-pyrophosphoryl-MurNAc-(pentapeptide)GlcNAc (lipid intermediate II). The protein is UDP-N-acetylglucosamine--N-acetylmuramyl-(pentapeptide) pyrophosphoryl-undecaprenol N-acetylglucosamine transferase of Streptomyces coelicolor (strain ATCC BAA-471 / A3(2) / M145).